Consider the following 1118-residue polypeptide: Protein argonaute 1B (1118 aa).

Disordered stretches follow at residues 1–175 and 188–246; these read MALQ…SRTV and APMV…RFPL. Residues 10–24 show a composition bias toward basic residues; it reads PHHHQVPIMVKKKRT. Over residues 25 to 35 the composition is skewed to low complexity; the sequence is GSGSTGESSGE. 3 stretches are compositionally biased toward gly residues: residues 54 to 92, 100 to 110, and 118 to 128; these read QHGG…HHPG, GRGGPGSHHPG, and GRGGSGSHHPG. 2 stretches are compositionally biased toward low complexity: residues 148 to 157 and 193 to 219; these read RGGMPQPYYG and PTPS…QFQQ. Residues 220–241 show a composition bias toward polar residues; sequence LATRDQSSTSQAIQIAPPSSKS. The PAZ domain occupies 457 to 570; it reads PVIDFVAQLL…LPMEVCKIVE (114 aa). Positions 746-1067 constitute a Piwi domain; that stretch reads LLIVILPDNN…AAFRARFYME (322 aa).

It belongs to the argonaute family. Ago subfamily.

Probably involved in the RNA silencing pathway. May bind to short RNAs such as microRNAs (miRNAs) or short interfering RNAs (siRNAs), and represses the translation of mRNAs which are complementary to them. The chain is Protein argonaute 1B (AGO1B) from Oryza sativa subsp. japonica (Rice).